The sequence spans 993 residues: DNA double-strand break repair Rad50 ATPase (993 aa).

Residues Arg-12, 32-38, and Gln-133 each bind ATP; that span reads NGSGKSS. Coiled-coil stretches lie at residues 192 to 222 and 402 to 493; these read LENL…LEKL and EELK…LEKT. The Zinc-hook domain occupies 452 to 556; that stretch reads ENELKEKYED…KLNEIDSFKL (105 aa). Residues Cys-497 and Cys-500 each contribute to the Zn(2+) site. Coiled-coil stretches lie at residues 570 to 612, 646 to 677, and 702 to 731; these read KVEE…LEND, DSSK…EINL, and ETEK…VLKN.

The protein belongs to the SMC family. RAD50 subfamily. As to quaternary structure, homodimer. Forms a heterotetramer composed of two Mre11 subunits and two Rad50 subunits. Requires Zn(2+) as cofactor.

Its function is as follows. Part of the Rad50/Mre11 complex, which is involved in the early steps of DNA double-strand break (DSB) repair. The complex may facilitate opening of the processed DNA ends to aid in the recruitment of HerA and NurA. Rad50 controls the balance between DNA end bridging and DNA resection via ATP-dependent structural rearrangements of the Rad50/Mre11 complex. The polypeptide is DNA double-strand break repair Rad50 ATPase (Methanococcus maripaludis (strain DSM 14266 / JCM 13030 / NBRC 101832 / S2 / LL)).